An 8903-amino-acid chain; its full sequence is Nonribosomal peptide synthetase vlms (8903 aa).

Positions 11–84 constitute a Carrier 1 domain; the sequence is GSCRTTLGKV…ELADSIDEQN (74 aa). Residues 13 to 81 are thiolation (T) domain 1; sequence CRTTLGKVAA…TLAELADSID (69 aa). Residue serine 45 is modified to O-(pantetheine 4'-phosphoryl)serine. 2 adenylation (A) domain regions span residues 59–736 and 989–1386; these read GIWV…SHLP and MAAQ…IKIR. The interval 572–953 is condensation (C) domain 1; sequence VPHQLDTEKL…FLLDGVNMSI (382 aa). Positions 1524 to 1600 constitute a Carrier 2 domain; that stretch reads SSMSTVEQEL…QLALAAESQA (77 aa). Residues 1529 to 1597 form a thiolation (T) domain 2 region; the sequence is VEQELRQIWS…TIPQLALAAE (69 aa). O-(pantetheine 4'-phosphoryl)serine is present on serine 1561. An epimerase (E) domain 1 region spans residues 1613-2050; sequence FPLSPIQKMY…TVKELAAVSA (438 aa). A condensation (C) domain 2 region spans residues 2091 to 2523; the sequence is DILPCSPIQQ…LLSVSEENKL (433 aa). The segment at 2546-2943 is adenylation (A) domain 2; sequence MSSHADATAI…GRQDSQVKIR (398 aa). The Carrier 3 domain occupies 3084-3160; it reads LFTTAIERQL…ELALQAKMVD (77 aa). The segment at 3089 to 3157 is thiolation (T) domain 3; sequence IERQLRQVWS…TIPELALQAK (69 aa). Residue serine 3121 is modified to O-(pantetheine 4'-phosphoryl)serine. The epimerase (E) domain 2 stretch occupies residues 3174–3614; that stretch reads FALSPIQQMY…AIKSLVEELM (441 aa). Residues 3655–4093 are condensation (C) domain 3; it reads EDILPCSPMQ…LMSTKDIQQL (439 aa). The adenylation (A) domain 3 stretch occupies residues 4114-4512; it reads ERLNTQPESM…GRIDTQIKIR (399 aa). In terms of domain architecture, Carrier 4 spans 4649–4725; the sequence is APRTTMEKKL…DLAEATELKC (77 aa). The tract at residues 4654 to 4722 is thiolation (T) domain 4; it reads MEKKLRDLFA…ILADLAEATE (69 aa). Serine 4686 is modified (O-(pantetheine 4'-phosphoryl)serine). The tract at residues 4775 to 5191 is condensation (C) domain 4; that stretch reads EDVYPCSPLQ…AQLQMLSEED (417 aa). The interval 5216–5614 is adenylation (A) domain 4; that stretch reads ETMTSQPDAP…GRRDTQVKIR (399 aa). Positions 5753–5829 constitute a Carrier 5 domain; it reads APTTAMEKRL…DLAQELEQRH (77 aa). A thiolation (T) domain 5 region spans residues 5758-5826; that stretch reads MEKRLQNLFC…RLGDLAQELE (69 aa). Residue serine 5790 is modified to O-(pantetheine 4'-phosphoryl)serine. Residue glutamate 5875 is a region of interest, condensation (C) domain 5. The adenylation (A) domain 5 stretch occupies residues 6311–6702; that stretch reads EEQMSLRPSE…GRMDGQIKIR (392 aa). In terms of domain architecture, Carrier 6 spans 6836-6912; that stretch reads SSATNTERQL…ELAATLEVMD (77 aa). Residues 6841–6909 form a thiolation (T) domain 6 region; sequence TERQLRQIWS…TIPELAATLE (69 aa). Serine 6873 is subject to O-(pantetheine 4'-phosphoryl)serine. The tract at residues 6923-7349 is epimerase (E) domain 3; that stretch reads GFFELSPIQR…YGRTIKTLVE (427 aa). Residues 7391-7823 form a condensation (C) domain 6 region; that stretch reads EDILPCSPIQ…LVLTNDEAQI (433 aa). The interval 7844–8240 is adenylation (A) domain 6; it reads EQMARKPEAQ…LDRIGTQVKI (397 aa). The Carrier 7 domain occupies 8368-8444; it reads APISATEAVF…AMAACVSDVS (77 aa). A thiolation (T) domain 7 region spans residues 8369 to 8441; sequence PISATEAVFC…VLHAMAACVS (73 aa). At serine 8405 the chain carries O-(pantetheine 4'-phosphoryl)serine. Residues 8482–8897 form a condensation (C) domain 7 region; it reads DVLPTTEFQT…MENPRSTVGH (416 aa).

This sequence belongs to the NRP synthetase family.

It functions in the pathway secondary metabolite biosynthesis. Its function is as follows. Nonribosomal peptide synthetase; part of the gene cluster that mediates the biosynthesis of verlamelin, a lipopeptide that exhibits antifungal activity against plant pathogenic fungi. Verlamelin is a cyclic hexadepsipeptide and is bridged by ester bonding between a 5-hydroxytetradecanoic acid moiety and a carboxyl group on the terminal Val of amide-bonded tetradecanoyl-hexapeptide D-allo-Thr-D-Ala-L-Pro-L-Gln-D-Tyr-L-Val. VlmA and vlmB are altogether regarded as essential components in the biosynthesis of 5-hydroxytetradecanoic acid. VlmA catalyzes the hydroxylation at position C5 of tetradecanoic acid produced in primary metabolism, while the precise function of vlmB still remains to be solved. To be loaded onto the waiting NRPS, 5-hydroxytetradecanoic acid is activated in the form of acyladenylate by the AMP-dependent ligase vlmC. VlmS seems to accept the fatty-acyl intermediate onto the initial module to further elongate amino acid residues by the downstream modules. In addition, in the last module at its C-terminus, vlmS contains a surplus condensation (C) domain that may be involved in cyclization, the last step to form verlamelin. This is Nonribosomal peptide synthetase vlms from Lecanicillium sp.